Consider the following 218-residue polypeptide: Putative transposase InsD for insertion element IS2E (218 aa).

Residues 23–206 (KPAVPPSKRA…SPREYLRQRA (184 aa)) form the Integrase catalytic domain.

In terms of biological role, involved in the transposition of the insertion sequence IS2. This is Putative transposase InsD for insertion element IS2E (insD8) from Escherichia coli (strain K12).